The sequence spans 230 residues: Type II restriction enzyme Eco47I (230 aa).

The enzyme catalyses Endonucleolytic cleavage of DNA to give specific double-stranded fragments with terminal 5'-phosphates.. Functionally, a P subtype restriction enzyme that recognizes the double-stranded sequence 5'-GGWCC-3' and cleaves after G-1. The chain is Type II restriction enzyme Eco47I from Escherichia coli.